Consider the following 289-residue polypeptide: Glycine--tRNA ligase alpha subunit (289 aa).

It belongs to the class-II aminoacyl-tRNA synthetase family. As to quaternary structure, tetramer of two alpha and two beta subunits.

Its subcellular location is the cytoplasm. The enzyme catalyses tRNA(Gly) + glycine + ATP = glycyl-tRNA(Gly) + AMP + diphosphate. The chain is Glycine--tRNA ligase alpha subunit from Rickettsia bellii (strain OSU 85-389).